A 430-amino-acid polypeptide reads, in one-letter code: mRNA cap guanine-N(7) methyltransferase (430 aa).

Positions 1 to 88 (MALRPEKPVW…YDLEERKKKQ (88 aa)) are disordered. Over residues 15–37 (QYDRQYGKLEEPKPPREESKPGD) the composition is skewed to basic and acidic residues. Residues 136 to 419 (SPIIKLRNFN…FYTVFAFRKV (284 aa)) enclose the mRNA cap 0 methyltransferase domain. 145 to 146 (NN) is a binding site for mRNA. K149, G167, D189, D218, Q244, and Y249 together coordinate S-adenosyl-L-methionine.

Belongs to the class I-like SAM-binding methyltransferase superfamily. mRNA cap 0 methyltransferase family.

Its subcellular location is the nucleus. The catalysed reaction is a 5'-end (5'-triphosphoguanosine)-ribonucleoside in mRNA + S-adenosyl-L-methionine = a 5'-end (N(7)-methyl 5'-triphosphoguanosine)-ribonucleoside in mRNA + S-adenosyl-L-homocysteine. Its function is as follows. Responsible for methylating the 5'-cap structure of mRNAs. The protein is mRNA cap guanine-N(7) methyltransferase (ABD1) of Eremothecium gossypii (strain ATCC 10895 / CBS 109.51 / FGSC 9923 / NRRL Y-1056) (Yeast).